The chain runs to 292 residues: Glycine--tRNA ligase alpha subunit (292 aa).

It belongs to the class-II aminoacyl-tRNA synthetase family. Tetramer of two alpha and two beta subunits.

It is found in the cytoplasm. The enzyme catalyses tRNA(Gly) + glycine + ATP = glycyl-tRNA(Gly) + AMP + diphosphate. This chain is Glycine--tRNA ligase alpha subunit, found in Syntrophus aciditrophicus (strain SB).